A 399-amino-acid chain; its full sequence is S-adenosylmethionine synthase (399 aa).

H15 is a binding site for ATP. D17 serves as a coordination point for Mg(2+). Position 43 (E43) interacts with K(+). L-methionine contacts are provided by E56 and Q99. The tract at residues 99–109 is flexible loop; sequence QSPDIARGVNR. Residues 166–168, 232–233, D241, 247–248, A264, and K268 each bind ATP; these read DAK, RF, and RK. D241 is an L-methionine binding site. L-methionine is bound at residue K272.

It belongs to the AdoMet synthase family. As to quaternary structure, homotetramer; dimer of dimers. The cofactor is Mg(2+). K(+) is required as a cofactor.

It localises to the cytoplasm. It catalyses the reaction L-methionine + ATP + H2O = S-adenosyl-L-methionine + phosphate + diphosphate. It functions in the pathway amino-acid biosynthesis; S-adenosyl-L-methionine biosynthesis; S-adenosyl-L-methionine from L-methionine: step 1/1. Catalyzes the formation of S-adenosylmethionine (AdoMet) from methionine and ATP. The overall synthetic reaction is composed of two sequential steps, AdoMet formation and the subsequent tripolyphosphate hydrolysis which occurs prior to release of AdoMet from the enzyme. The chain is S-adenosylmethionine synthase from Nitrosospira multiformis (strain ATCC 25196 / NCIMB 11849 / C 71).